A 561-amino-acid polypeptide reads, in one-letter code: Tectonic-like complex member MKS1 (561 aa).

A C2 B9-type domain is found at 314-442; that stretch reads LRLFVNGEVV…TVSTWRPMEL (129 aa).

As to quaternary structure, part of the tectonic-like complex (also named B9 complex). Interacts with TMEM107. Interacts with TCTN3, AHI1, TCTN1, TCTN2, CC2D2A. Interacts with FLNA. Interacts with TMEM67. Interacts with B9D1 and B9D2. In terms of tissue distribution, widely expressed in embryo at 15.5 dpc, with a relatively strong expression in brain, liver, kidney and digits of the upper limbs. Highly expressed in bronchiolar epithelium.

The protein resides in the cytoplasm. The protein localises to the cytoskeleton. It is found in the cilium basal body. Its subcellular location is the microtubule organizing center. It localises to the centrosome. Its function is as follows. Component of the tectonic-like complex, a complex localized at the transition zone of primary cilia and acting as a barrier that prevents diffusion of transmembrane proteins between the cilia and plasma membranes. Involved in centrosome migration to the apical cell surface during early ciliogenesis. Required for ciliary structure and function, including a role in regulating length and appropriate number through modulating centrosome duplication. Required for cell branching morphology. The sequence is that of Tectonic-like complex member MKS1 (Mks1) from Mus musculus (Mouse).